The sequence spans 160 residues: Outer membrane protein MT2024.1 (160 aa).

Residues 1-22 (MSWSRVIAYGLLPGLALALTCG) form the signal peptide.

The protein localises to the cell outer membrane. This Mycobacterium tuberculosis (strain CDC 1551 / Oshkosh) protein is Outer membrane protein MT2024.1.